A 312-amino-acid chain; its full sequence is Acetaldehyde dehydrogenase (312 aa).

Residue 12 to 15 participates in NAD(+) binding; sequence SGNV. C132 (acyl-thioester intermediate) is an active-site residue. NAD(+) is bound by residues 163 to 171 and N290; that span reads SAGPGTRAN.

Belongs to the acetaldehyde dehydrogenase family.

The enzyme catalyses acetaldehyde + NAD(+) + CoA = acetyl-CoA + NADH + H(+). This chain is Acetaldehyde dehydrogenase (cbzQ), found in Pseudomonas putida (Arthrobacter siderocapsulatus).